The chain runs to 427 residues: TNF receptor-associated factor family protein DDB_G0285149 (427 aa).

Residues 20-65 (CIVCTDLLSESHDKIQVNQCPHGHCLCSDCWTKQIENKKKECPICR) form an RING-type zinc finger. 2 consecutive TRAF-type zinc fingers follow at residues 122-178 (THFK…INKD) and 178-234 (DHLE…KHQA). An MATH domain is found at 284–415 (KYSNQWVIEN…GNKLTIKFEI (132 aa)).

This sequence belongs to the TNF receptor-associated factor family. A subfamily.

Its subcellular location is the cytoplasm. In terms of biological role, probable adapter protein and signal transducer that links members of the tumor necrosis factor receptor family to different signaling pathways by association with the receptor cytoplasmic domain and kinases. The chain is TNF receptor-associated factor family protein DDB_G0285149 from Dictyostelium discoideum (Social amoeba).